The sequence spans 108 residues: uncharacterized protein (108 aa).

A compositionally biased stretch (polar residues) spans 1–15 (MSDSNSRLVYSTQTG). Residues 1-29 (MSDSNSRLVYSTQTGRIEEPKTAPVRPKG) form a disordered region. Basic and acidic residues predominate over residues 16 to 29 (RIEEPKTAPVRPKG).

It belongs to the SUI1 family.

This is an uncharacterized protein from Salmonella typhi.